The following is a 557-amino-acid chain: Laccase-11 (557 aa).

Residues 1-23 form the signal peptide; that stretch reads MKMGFLFLFCYLLAFLGYSPVDA. 2 Plastocyanin-like domains span residues 31–147 and 158–308; these read DVQV…PAPG and ESNI…YKGV. 3 N-linked (GlcNAc...) asparagine glycosylation sites follow: asparagine 36, asparagine 69, and asparagine 77. Cu cation contacts are provided by histidine 81 and histidine 83. An N-linked (GlcNAc...) asparagine glycan is attached at asparagine 115. Residues histidine 126 and histidine 128 each coordinate Cu cation. 8 N-linked (GlcNAc...) asparagine glycosylation sites follow: asparagine 240, asparagine 296, asparagine 323, asparagine 371, asparagine 381, asparagine 398, asparagine 416, and asparagine 440. Residues 406–541 enclose the Plastocyanin-like 3 domain; it reads DFPDRPPKAF…KMAFVVENGE (136 aa). Cu cation contacts are provided by histidine 458, histidine 461, histidine 463, histidine 520, cysteine 521, histidine 522, and histidine 526.

The protein belongs to the multicopper oxidase family. Cu cation is required as a cofactor. As to expression, ubiquitous and constitutive.

Its subcellular location is the secreted. It localises to the extracellular space. The protein resides in the apoplast. The catalysed reaction is 4 hydroquinone + O2 = 4 benzosemiquinone + 2 H2O. Functionally, lignin degradation and detoxification of lignin-derived products. The polypeptide is Laccase-11 (LAC11) (Arabidopsis thaliana (Mouse-ear cress)).